The chain runs to 189 residues: Protein GrpE (189 aa).

The disordered stretch occupies residues 1–37; it reads MSDSSKEKKKKFADMVSRQKGDDQQSDNHKQTDDLNE. A compositionally biased stretch (basic and acidic residues) spans 17–33; it reads SRQKGDDQQSDNHKQTD.

The protein belongs to the GrpE family. In terms of assembly, homodimer.

The protein resides in the cytoplasm. In terms of biological role, participates actively in the response to hyperosmotic and heat shock by preventing the aggregation of stress-denatured proteins, in association with DnaK and GrpE. It is the nucleotide exchange factor for DnaK and may function as a thermosensor. Unfolded proteins bind initially to DnaJ; upon interaction with the DnaJ-bound protein, DnaK hydrolyzes its bound ATP, resulting in the formation of a stable complex. GrpE releases ADP from DnaK; ATP binding to DnaK triggers the release of the substrate protein, thus completing the reaction cycle. Several rounds of ATP-dependent interactions between DnaJ, DnaK and GrpE are required for fully efficient folding. In Wolbachia pipientis wMel, this protein is Protein GrpE.